Consider the following 315-residue polypeptide: MFAFICLLAIASAIDFNTWASKNNKHFTAIEKLRRRAIFNMNAKFVDSFNKIGSFKLSVDGPFAAMTNEEYRTLLKSKRTTEENGQVKYLNIQAPESVDWRKEGKVTPIRDQAQCGSCYTFGSLAALEGRLLIEKGGDANTLDLSEEHMVQCTRDNGNNGCNGGLGSNVYDYIIEHGVAKESDYPYTGSDSTCKTNVKSFAKITGYTKVPRNNEAELKAALSQGLVDVSIDASSAKFQLYKSGAYTDTKCKNNYFALNHEVCAVGYGVVDGKECWIVRNSWGTGWGDKGYINMVIEGNTCGVATDPLYPTGVQYL.

A signal peptide spans 1–13 (MFAFICLLAIASA). Residues 14–93 (IDFNTWASKN…NGQVKYLNIQ (80 aa)) constitute a propeptide, activation peptide. Intrachain disulfides connect cysteine 115-cysteine 161 and cysteine 152-cysteine 193. Cysteine 118 is a catalytic residue. Residues histidine 259 and asparagine 279 contribute to the active site.

This sequence belongs to the peptidase C1 family. Interacts with cysteine protease inhibitor ICP1. Interacts with cysteine protease inhibitor ICP2.

It localises to the cell membrane. It is found in the cytoplasmic vesicle. The protein resides in the phagosome. The protein localises to the secreted. The enzyme catalyses Hydrolysis of proteins, including basement membrane collagen and azocasein. Preferential cleavage: Arg-Arg-|-Xaa in small molecule substrates including Z-Arg-Arg-|-NHMec.. Its activity is regulated as follows. Inhibited by cysteine protease inhibitors ICP1 and ICP2. Inhibited by leupeptin and such inhibitors of cysteine proteinases as L-transepoxysuccinyl-L-leucylamido-(4-guanidino)butane, peptidyldiazomethanes, iodoacetic acid and chicken cystatin. Functionally, cysteine protease which degrades matrix proteins such as collagen, laminin and fibronectin and thus is involved in the destruction of human tissue. Can abolish adhesion. May play an important role in pathogenicity. The polypeptide is Cysteine proteinase 2 (Entamoeba histolytica (strain ATCC 30459 / HM-1:IMSS / ABRM)).